Reading from the N-terminus, the 511-residue chain is Maturase K (511 aa).

The protein belongs to the intron maturase 2 family. MatK subfamily.

The protein resides in the plastid. The protein localises to the chloroplast. Functionally, usually encoded in the trnK tRNA gene intron. Probably assists in splicing its own and other chloroplast group II introns. This is Maturase K from Brachypodium distachyon (Purple false brome).